A 136-amino-acid polypeptide reads, in one-letter code: MLERNLTSMMSVEEPLPRPLTSLYIRLSILERNHMNMTYMAKSSVKIHISKVIIGFVLKRSLTNVCGKVLSQNSHLVNHQRIHTGEKSYRCHECGKAFTQGSRFINHQIVHTGENFPNVLNVARLLRMALNSGLTK.

A C2H2-type 1; degenerate zinc finger spans residues 64-83 (NVCGKVLSQNSHLVNHQRIH). The segment at 89–111 (YRCHECGKAFTQGSRFINHQIVH) adopts a C2H2-type 2 zinc-finger fold.

The protein belongs to the krueppel C2H2-type zinc-finger protein family.

The protein localises to the nucleus. Its function is as follows. May be involved in transcriptional regulation. The polypeptide is Putative zinc finger protein 818 (ZNF818P) (Homo sapiens (Human)).